The chain runs to 409 residues: DNA double-strand break repair protein Mre11 (409 aa).

Mn(2+)-binding residues include aspartate 9, histidine 11, aspartate 50, and glutamate 85. Histidine 86 functions as the Proton donor in the catalytic mechanism. Positions 170, 199, and 201 each coordinate Mn(2+).

It belongs to the MRE11/RAD32 family. In terms of assembly, homodimer. Forms a heterotetramer composed of two Mre11 subunits and two Rad50 subunits. The cofactor is Mn(2+).

Its activity is regulated as follows. Nuclease activity is regulated by Rad50. Its function is as follows. Part of the Rad50/Mre11 complex, which is involved in the early steps of DNA double-strand break (DSB) repair. The complex may facilitate opening of the processed DNA ends to aid in the recruitment of HerA and NurA. Mre11 binds to DSB ends and has both double-stranded 3'-5' exonuclease activity and single-stranded endonuclease activity. In Aeropyrum pernix (strain ATCC 700893 / DSM 11879 / JCM 9820 / NBRC 100138 / K1), this protein is DNA double-strand break repair protein Mre11.